The chain runs to 116 residues: Protein TRACHEARY ELEMENT DIFFERENTIATION-RELATED 6 (116 aa).

Residues 1 to 24 are Extracellular-facing; it reads MASTDSVYRPTPTPDHDTTVVVVV. Residues 25 to 45 traverse the membrane as a helical segment; that stretch reads FVSLGCVMFLAFLAFVIWFLI. The Cytoplasmic segment spans residues 46–116; the sequence is KKRSRKHRER…GVGSSVVSRS (71 aa).

Interacts with CESA7/IRX3, a subunit of the secondary cell wall (SCW)-related cellulose synthase complex. As to expression, expressed preferentially in differentiating vessel elements in seedlings.

It is found in the cell membrane. Its subcellular location is the secreted. The protein localises to the cell wall. Its function is as follows. Involved in the secondary cell wall (SCW) formation of vessel elements (e.g. protoxylem and metaxylem), thus promoting tracheary element (TE) differentiation. This is Protein TRACHEARY ELEMENT DIFFERENTIATION-RELATED 6 from Arabidopsis thaliana (Mouse-ear cress).